The following is a 383-amino-acid chain: Dihydroorotase (383 aa).

2 residues coordinate Zn(2+): H47 and H49. Substrate-binding positions include H49–R51 and N81. 4 residues coordinate Zn(2+): K128, H159, H198, and D264. Residue K128 is modified to N6-carboxylysine. The active site involves D264. Substrate contacts are provided by residues H268 and P280–G281.

The protein belongs to the metallo-dependent hydrolases superfamily. DHOase family. Class I DHOase subfamily. Zn(2+) serves as cofactor.

The catalysed reaction is (S)-dihydroorotate + H2O = N-carbamoyl-L-aspartate + H(+). Its pathway is pyrimidine metabolism; UMP biosynthesis via de novo pathway; (S)-dihydroorotate from bicarbonate: step 3/3. In terms of biological role, catalyzes the reversible cyclization of carbamoyl aspartate to dihydroorotate. This is Dihydroorotase from Pyrobaculum aerophilum (strain ATCC 51768 / DSM 7523 / JCM 9630 / CIP 104966 / NBRC 100827 / IM2).